We begin with the raw amino-acid sequence, 167 residues long: MSSGIGSLVKVIFKNFDVIAGPVISLVYPLYASVRAIESRSHGDDKQWLTYWALYSLIKLFELTFFRLLEWIPLYPYAKLALTSWLVLPGMNGAAYLYEHYVRSFLLSPHTVNVWYVPAKKDDDLGATAGKFTPVNDSGAPQEKIVSSVDTSAKYVGHSAFDDAYIY.

The next 3 helical transmembrane spans lie at Val-18–Glu-38, Gln-47–Arg-67, and Leu-68–Leu-88.

The protein belongs to the DP1 family. Predominantly expressed in flower buds.

The protein resides in the membrane. The protein is HVA22-like protein b (HVA22B) of Arabidopsis thaliana (Mouse-ear cress).